The chain runs to 481 residues: Arf-GAP domain and FG repeat-containing protein 2 (481 aa).

Residues 27-153 (EVWCRRVREL…WYVPPDQVKG (127 aa)) enclose the Arf-GAP domain. The C4-type zinc-finger motif lies at 47–70 (CFECAQRGVTYVDITVGSFVCTTC). Disordered regions lie at residues 150 to 220 (QVKG…SVKK), 271 to 309 (SSVFGSLPPAGQASFQAQPTPAGSSQGTPFGATPLAPAS), and 431 to 481 (QQNG…NPFL). Over residues 157–166 (TKGSASTPVQ) the composition is skewed to polar residues. K173 is modified (N6-acetyllysine). Polar residues-rich tracts occupy residues 188–210 (VAASTSSQPVSQSHARTSQARST), 283–298 (ASFQAQPTPAGSSQGT), and 454–481 (AGISTNPFMTGPSSSPFASKPPTTNPFL).

Interacts with EPS15R.

The chain is Arf-GAP domain and FG repeat-containing protein 2 (AGFG2) from Homo sapiens (Human).